Consider the following 628-residue polypeptide: Cystathionine gamma-synthase-like enzyme iboG2 (628 aa).

Position 313 (Y313) interacts with substrate. K417 bears the N6-(pyridoxal phosphate)lysine mark.

Belongs to the trans-sulfuration enzymes family. Pyridoxal 5'-phosphate serves as cofactor.

Its pathway is secondary metabolite biosynthesis. Cystathionine gamma-synthase-like enzyme; part of the gene cluster that mediates the biosynthesis of the psychoactive metabolites ibotenic acid and muscimol. The first committed step is glutamate hydroxylation by the 2-oxoglutarate-dependent dioxygenase iboH, and the last step is decarboxylation of ibotenic acid to muscimol by the decarboxylase iboD. The order of the intermediate reactions is somewhat ambiguous. IboA likely activates the carboxylic acid at position 5 to introduce an amide bond, and the flavin monooxygenase iboF generates the N-O bond. There are several options for the latter step. One option is that iboF directly hydroxylates the amide nitrogen formed by iboA to produce a hydroxamic acid species. Another option is that iboF hydroxylates an external N-containing compound, whose resulting N-O bond is subsequently introduced into the hydroxyglutamate scaffold. The paralogous PLP-dependent cystathionine gamma-synthase-like enzymes iboG1 and iboG2 are likely involved in substitution of the OH group at position 3 by the O-N moiety. The first cyclic intermediate is most probably tricholomic acid which is likely desaturated to ibotenic acid by the cytochrome P450 monooxygenase iboC. This is Cystathionine gamma-synthase-like enzyme iboG2 from Amanita muscaria (strain Koide BX008).